Here is a 330-residue protein sequence, read N- to C-terminus: Src kinase-associated phosphoprotein 2-B (330 aa).

A disordered region spans residues 57-84 (DKAEDDDQEENDGFPLPPDAVSLASDRD). Acidic residues predominate over residues 59–68 (AEDDDQEEND). The PH domain maps to 105–208 (EYLKAGYLEK…WINAIMNSRG (104 aa)). The segment at 236-261 (ELPEESEKPVTETETQKATPVPVNNT) is disordered. Positions 240–250 (ESEKPVTETET) are enriched in basic and acidic residues. The segment covering 251 to 261 (QKATPVPVNNT) has biased composition (polar residues). An SH3 domain is found at 268–329 (DYANFYRGLW…PKAYIIEMYD (62 aa)).

This sequence belongs to the SKAP family. Phosphorylated on tyrosines.

The protein localises to the cytoplasm. May be involved in B-cell and macrophage adhesion processes. May play a role in src signaling pathway. This chain is Src kinase-associated phosphoprotein 2-B (skap2-b), found in Xenopus laevis (African clawed frog).